Reading from the N-terminus, the 323-residue chain is Cytosolic sulfotransferase 5 (323 aa).

69 to 74 (KCGTTW) is a binding site for 3'-phosphoadenylyl sulfate. The active-site Proton acceptor is the histidine 135. 3'-phosphoadenylyl sulfate is bound by residues arginine 157, serine 165, and 289-291 (RKG).

The protein belongs to the sulfotransferase 1 family. Expressed in inflorescence stems, roots and siliques.

It localises to the cytoplasm. Functionally, sulfotransferase that utilizes 3'-phospho-5'-adenylyl sulfate (PAPS) as sulfonate donor to specifically catalyze the sulfate conjugation of flavones and flavonols. Strictly specific for the position 7. Substrate preference is kaempferol 3-sulfate &gt; isorhamnetin &gt; kaempferol. This Arabidopsis thaliana (Mouse-ear cress) protein is Cytosolic sulfotransferase 5 (SOT5).